Reading from the N-terminus, the 132-residue chain is MFSNISNQKLVLFFTIILIALCPFVYYLWDNEILGIGNWGRKRKDTFEDKNCSTEIEHAIEEHKRKNKEKKEAKEKRLAPGRVKISTYDVNNENYLLGDVNDELQPNIPGYLTKETAYPFDCEPDDRSNRWL.

Residues 10–30 traverse the membrane as a helical segment; that stretch reads LVLFFTIILIALCPFVYYLWD. The stretch at 50–79 forms a coiled coil; it reads KNCSTEIEHAIEEHKRKNKEKKEAKEKRLA.

The protein localises to the membrane. This is an uncharacterized protein from Invertebrate iridescent virus 6 (IIV-6).